A 117-amino-acid polypeptide reads, in one-letter code: cAMP-regulated phosphoprotein 19-B (117 aa).

Positions 1 to 37 are enriched in basic and acidic residues; the sequence is MSRDNQEIKAPEESSAEEQKEMDDKVTSPEKAEEIKL. The disordered stretch occupies residues 1 to 54; it reads MSRDNQEIKAPEESSAEEQKEMDDKVTSPEKAEEIKLKSRYPNIGPKPGGSDFL. Serine 28 bears the Phosphoserine; by CDK2 mark. Phosphoserine; by GWL is present on serine 67. The interval 77–117 is disordered; the sequence is MKNKQLPTAAPDKTEVTGDHIPTPQDLPQRKPSLVASKLAG. The residue at position 99 (threonine 99) is a Phosphothreonine; by CDK2. Serine 109 carries the post-translational modification Phosphoserine; by PKA.

The protein belongs to the endosulfine family. In terms of assembly, interacts (when phosphorylated at Ser-67) with ppp2r2d. Post-translationally, phosphorylation at Ser-67 by gwl during mitosis is essential for interaction with ppp2r2d (PR55-delta) and subsequent inactivation of PP2A.

The protein localises to the cytoplasm. Protein phosphatase inhibitor that specifically inhibits protein phosphatase 2A (PP2A) during mitosis. When phosphorylated at Ser-67 during mitosis, specifically interacts with ppp2r2d (PR55-delta) and inhibits its activity, leading to inactivation of PP2A, an essential condition to keep cyclin-B1-CDK1 activity high during M phase. This Xenopus laevis (African clawed frog) protein is cAMP-regulated phosphoprotein 19-B (arpp19-b).